Consider the following 466-residue polypeptide: MALLTAAARLFGAKNASCLVLAARHASASSTNLKDILADLIPKEQTRVKAFRQQHGKTVVGQITVDMMYGGMRGMKGLVYETSVLDPDEGIRFRGYSIPECQKLLPKAKGGEEPLPEGLFWLLVTGQIPTEEQVSWLSQEWAKRAALPSHVVTMLDNFPTNLHPMSQLSAAVTALNSESTFARAYSEGINRTKYWELIYEDSMDLIAKLPCVAAKIYRNLYREGSSIGAIDPKLDWSHNFTNMLGYTDAQFTELMRLYLTIHSDHEGGNVSAHTSHLVGSALSDPYLSFAAAMNGLAGPLHGLANQEVLVWLTQLQKEVGKDVSDEKLRDYIWNTLNSGRVVPGYGHAVLRKTDPRYTCQREFALKHLPQDPMFKLVAQLYKIVPNILLEQGKAKNPWPNVDAHSGVLLQYYGMTEMNYYTVLFGVSRALGVLAQLIWSRALGFPLERPKSMSTDGLMKFVDSKSG.

A mitochondrion-targeting transit peptide spans 1–27; the sequence is MALLTAAARLFGAKNASCLVLAARHAS. Positions 2–21 match the SIFI-degron motif; the sequence is ALLTAAARLFGAKNASCLVL. Lys-57 is modified (N6-succinyllysine). Lys-76 is subject to N6-acetyllysine; alternate. Lys-76 bears the N6-succinyllysine; alternate mark. N6-succinyllysine is present on residues Lys-103 and Lys-193. Ser-226 is subject to Phosphoserine. His-301 is an active-site residue. N6-acetyllysine; alternate is present on residues Lys-321 and Lys-327. An N6-succinyllysine; alternate mark is found at Lys-321 and Lys-327. His-347 is an active-site residue. An oxaloacetate-binding site is contributed by Arg-356. An N6-acetyllysine; alternate modification is found at Lys-375. N6-succinyllysine; alternate is present on Lys-375. N6-acetyllysine is present on Lys-382. Lys-393 carries the N6-acetyllysine; alternate modification. Lys-393 is modified (N6-succinyllysine; alternate). Lys-395 carries the N6,N6,N6-trimethyllysine modification. Asp-402 is an active-site residue. Positions 428 and 448 each coordinate oxaloacetate. At Lys-450 the chain carries N6-succinyllysine. The residue at position 459 (Lys-459) is an N6-acetyllysine; alternate. An N6-succinyllysine; alternate modification is found at Lys-459.

The protein belongs to the citrate synthase family. Homodimer. Methylated. Trimethylation at Lys-395 by CSKMT decreases citrate synthase activity. Post-translationally, in response to mitochondrial stress, the precursor protein is ubiquitinated by the SIFI complex in the cytoplasm before mitochondrial import, leading to its degradation. Within the SIFI complex, UBR4 initiates ubiquitin chain that are further elongated or branched by KCMF1.

The protein localises to the mitochondrion matrix. It catalyses the reaction oxaloacetate + acetyl-CoA + H2O = citrate + CoA + H(+). Its pathway is carbohydrate metabolism; tricarboxylic acid cycle; isocitrate from oxaloacetate: step 1/2. Functionally, key enzyme of the Krebs tricarboxylic acid cycle which catalyzes the synthesis of citrate from acetyl coenzyme A and oxaloacetate. The sequence is that of Citrate synthase, mitochondrial (CS) from Bos taurus (Bovine).